The chain runs to 430 residues: tRNA(Ile)-lysidine synthase (430 aa).

27 to 32 (SGGSDS) serves as a coordination point for ATP.

The protein belongs to the tRNA(Ile)-lysidine synthase family.

Its subcellular location is the cytoplasm. The enzyme catalyses cytidine(34) in tRNA(Ile2) + L-lysine + ATP = lysidine(34) in tRNA(Ile2) + AMP + diphosphate + H(+). Its function is as follows. Ligates lysine onto the cytidine present at position 34 of the AUA codon-specific tRNA(Ile) that contains the anticodon CAU, in an ATP-dependent manner. Cytidine is converted to lysidine, thus changing the amino acid specificity of the tRNA from methionine to isoleucine. The polypeptide is tRNA(Ile)-lysidine synthase (Rickettsia typhi (strain ATCC VR-144 / Wilmington)).